A 338-amino-acid polypeptide reads, in one-letter code: 3-phosphoshikimate 1-carboxyvinyltransferase 2 (338 aa).

Arg-25 serves as a coordination point for phosphoenolpyruvate. Positions 72, 73, 74, 100, 225, and 252 each coordinate 3-phosphoshikimate. A phosphoenolpyruvate-binding site is contributed by Gln-74. Asp-225 serves as the catalytic Proton acceptor. The phosphoenolpyruvate site is built by Arg-256, Arg-298, and Lys-323.

The protein belongs to the EPSP synthase family.

The protein localises to the plastid. It localises to the chloroplast. The enzyme catalyses 3-phosphoshikimate + phosphoenolpyruvate = 5-O-(1-carboxyvinyl)-3-phosphoshikimate + phosphate. The protein operates within metabolic intermediate biosynthesis; chorismate biosynthesis; chorismate from D-erythrose 4-phosphate and phosphoenolpyruvate: step 6/7. Catalyzes the transfer of the enolpyruvyl moiety of phosphoenolpyruvate (PEP) to the 5-hydroxyl of shikimate-3-phosphate (S3P) to produce enolpyruvyl shikimate-3-phosphate and inorganic phosphate. The chain is 3-phosphoshikimate 1-carboxyvinyltransferase 2 (EPSPS-2) from Nicotiana tabacum (Common tobacco).